The sequence spans 257 residues: NAD kinase (257 aa).

Aspartate 46 (proton acceptor) is an active-site residue. Residues 46–47, 116–117, aspartate 146, alanine 154, 157–162, and asparagine 218 contribute to the NAD(+) site; these read DG, NE, and TAYNLS.

Belongs to the NAD kinase family. A divalent metal cation serves as cofactor.

It localises to the cytoplasm. It carries out the reaction NAD(+) + ATP = ADP + NADP(+) + H(+). Involved in the regulation of the intracellular balance of NAD and NADP, and is a key enzyme in the biosynthesis of NADP. Catalyzes specifically the phosphorylation on 2'-hydroxyl of the adenosine moiety of NAD to yield NADP. The chain is NAD kinase from Brucella melitensis biotype 1 (strain ATCC 23456 / CCUG 17765 / NCTC 10094 / 16M).